The following is a 115-amino-acid chain: Procyclic form-specific polypeptide (115 aa).

An N-terminal signal peptide occupies residues 1-27 (MAPRSLYLLAVLLFSANLFAGVGFAAA). The tract at residues 27-97 (AAEGPEDKGL…PEPEPGAATL (71 aa)) is disordered. A compositionally biased stretch (basic and acidic residues) spans 31-52 (PEDKGLTKGGKGKGEKGTKVGA). Residue Asn56 is glycosylated (N-linked (GlcNAc...) asparagine). A run of 17 repeats spans residues 59–60 (DP), 61–62 (DP), 63–64 (EP), 65–66 (EP), 67–68 (EP), 69–70 (EP), 71–72 (EP), 73–74 (EP), 75–76 (EP), 77–78 (EP), 79–80 (EP), 81–82 (EP), 83–84 (EP), 85–86 (EP), 87–88 (EP), 89–90 (EP), and 91–92 (EP). The tract at residues 59–92 (DPDPEPEPEPEPEPEPEPEPEPEPEPEPEPEPEP) is 17 X 2 AA tandem repeats of [DE]-P. A compositionally biased stretch (acidic residues) spans 60–90 (PDPEPEPEPEPEPEPEPEPEPEPEPEPEPEP). Gly93 carries the GPI-anchor amidated glycine lipid modification. A propeptide spans 94–115 (AATLKSVALPFAIAAAALVAAF) (removed in mature form).

It localises to the cell membrane. Its function is as follows. Major surface antigen of procyclic forms. In Trypanosoma brucei brucei, this protein is Procyclic form-specific polypeptide (PROA).